The sequence spans 190 residues: Threonylcarbamoyl-AMP synthase (190 aa).

One can recognise a YrdC-like domain in the interval 7 to 190 (SQDVASLVIA…ALSGELIRQG (184 aa)).

The protein belongs to the SUA5 family. TsaC subfamily.

The protein localises to the cytoplasm. The catalysed reaction is L-threonine + hydrogencarbonate + ATP = L-threonylcarbamoyladenylate + diphosphate + H2O. Its function is as follows. Required for the formation of a threonylcarbamoyl group on adenosine at position 37 (t(6)A37) in tRNAs that read codons beginning with adenine. Catalyzes the conversion of L-threonine, HCO(3)(-)/CO(2) and ATP to give threonylcarbamoyl-AMP (TC-AMP) as the acyladenylate intermediate, with the release of diphosphate. The chain is Threonylcarbamoyl-AMP synthase from Sodalis glossinidius (strain morsitans).